The chain runs to 300 residues: Protoheme IX farnesyltransferase (300 aa).

9 helical membrane-spanning segments follow: residues 28-48 (VVAL…PTIL), 50-70 (VQPL…AAAL), 100-120 (ALIF…VFTN), 122-142 (LTAW…TAYL), 149-169 (NIVI…TAVT), 176-196 (ALLL…ALAI), 222-242 (CILL…LVGM), 243-263 (SGPL…YKAW), and 280-300 (FSIY…YLWA).

Belongs to the UbiA prenyltransferase family. Protoheme IX farnesyltransferase subfamily.

It localises to the cell inner membrane. The enzyme catalyses heme b + (2E,6E)-farnesyl diphosphate + H2O = Fe(II)-heme o + diphosphate. It functions in the pathway porphyrin-containing compound metabolism; heme O biosynthesis; heme O from protoheme: step 1/1. Its function is as follows. Converts heme B (protoheme IX) to heme O by substitution of the vinyl group on carbon 2 of heme B porphyrin ring with a hydroxyethyl farnesyl side group. The chain is Protoheme IX farnesyltransferase from Shewanella oneidensis (strain ATCC 700550 / JCM 31522 / CIP 106686 / LMG 19005 / NCIMB 14063 / MR-1).